Here is a 313-residue protein sequence, read N- to C-terminus: Small ribosomal subunit biogenesis GTPase RsgA (313 aa).

The region spanning 82–235 (REKLIAANAT…IIDSPGIQQF (154 aa)) is the CP-type G domain. GTP is bound by residues 127 to 130 (NKTD) and 177 to 185 (GQSGMGKST). Residues cysteine 259, cysteine 264, histidine 266, and cysteine 272 each coordinate Zn(2+).

The protein belongs to the TRAFAC class YlqF/YawG GTPase family. RsgA subfamily. In terms of assembly, monomer. Associates with 30S ribosomal subunit, binds 16S rRNA. The cofactor is Zn(2+).

It localises to the cytoplasm. Functionally, one of several proteins that assist in the late maturation steps of the functional core of the 30S ribosomal subunit. Helps release RbfA from mature subunits. May play a role in the assembly of ribosomal proteins into the subunit. Circularly permuted GTPase that catalyzes slow GTP hydrolysis, GTPase activity is stimulated by the 30S ribosomal subunit. The sequence is that of Small ribosomal subunit biogenesis GTPase RsgA from Nitrosospira multiformis (strain ATCC 25196 / NCIMB 11849 / C 71).